A 467-amino-acid polypeptide reads, in one-letter code: Light-independent protochlorophyllide reductase subunit N (467 aa).

[4Fe-4S] cluster is bound by residues Cys22, Cys47, and Cys107.

The protein belongs to the BchN/ChlN family. As to quaternary structure, protochlorophyllide reductase is composed of three subunits; ChlL, ChlN and ChlB. Forms a heterotetramer of two ChlB and two ChlN subunits. It depends on [4Fe-4S] cluster as a cofactor.

The protein resides in the plastid. Its subcellular location is the chloroplast. It carries out the reaction chlorophyllide a + oxidized 2[4Fe-4S]-[ferredoxin] + 2 ADP + 2 phosphate = protochlorophyllide a + reduced 2[4Fe-4S]-[ferredoxin] + 2 ATP + 2 H2O. The protein operates within porphyrin-containing compound metabolism; chlorophyll biosynthesis (light-independent). Component of the dark-operative protochlorophyllide reductase (DPOR) that uses Mg-ATP and reduced ferredoxin to reduce ring D of protochlorophyllide (Pchlide) to form chlorophyllide a (Chlide). This reaction is light-independent. The NB-protein (ChlN-ChlB) is the catalytic component of the complex. The chain is Light-independent protochlorophyllide reductase subunit N from Pinus thunbergii (Japanese black pine).